A 123-amino-acid chain; its full sequence is Large ribosomal subunit protein bL20 (123 aa).

It belongs to the bacterial ribosomal protein bL20 family.

Binds directly to 23S ribosomal RNA and is necessary for the in vitro assembly process of the 50S ribosomal subunit. It is not involved in the protein synthesizing functions of that subunit. The sequence is that of Large ribosomal subunit protein bL20 (rplT) from Chlamydia muridarum (strain MoPn / Nigg).